The primary structure comprises 267 residues: Hydroxyethylthiazole kinase (267 aa).

Methionine 51 contributes to the substrate binding site. Positions 127 and 173 each coordinate ATP. Substrate is bound at residue alanine 200.

This sequence belongs to the Thz kinase family. It depends on Mg(2+) as a cofactor.

The enzyme catalyses 5-(2-hydroxyethyl)-4-methylthiazole + ATP = 4-methyl-5-(2-phosphooxyethyl)-thiazole + ADP + H(+). Its pathway is cofactor biosynthesis; thiamine diphosphate biosynthesis; 4-methyl-5-(2-phosphoethyl)-thiazole from 5-(2-hydroxyethyl)-4-methylthiazole: step 1/1. In terms of biological role, catalyzes the phosphorylation of the hydroxyl group of 4-methyl-5-beta-hydroxyethylthiazole (THZ). This chain is Hydroxyethylthiazole kinase, found in Psychromonas ingrahamii (strain DSM 17664 / CCUG 51855 / 37).